A 387-amino-acid polypeptide reads, in one-letter code: Phosphoglycerate kinase (387 aa).

Substrate contacts are provided by residues 21–23 (DLN), arginine 36, 59–62 (HLGR), arginine 113, and arginine 146. ATP is bound by residues lysine 197, glutamate 314, and 340–343 (GGDT).

This sequence belongs to the phosphoglycerate kinase family. As to quaternary structure, monomer.

It localises to the cytoplasm. It catalyses the reaction (2R)-3-phosphoglycerate + ATP = (2R)-3-phospho-glyceroyl phosphate + ADP. It participates in carbohydrate degradation; glycolysis; pyruvate from D-glyceraldehyde 3-phosphate: step 2/5. The protein is Phosphoglycerate kinase of Pectobacterium carotovorum subsp. carotovorum (strain PC1).